The chain runs to 39 residues: AHDGNPLEECFREDDEEFFLEIAKNGLTATSNPKRVVIV.

Belongs to the flavin monoamine oxidase family. FIG1 subfamily. Monomer. This is in contrast with most of its orthologs, that are non-covalently linked homodimers. Requires FAD as cofactor. In terms of processing, N-glycosylated. As to expression, expressed by the venom gland.

The protein localises to the secreted. It catalyses the reaction an L-alpha-amino acid + O2 + H2O = a 2-oxocarboxylate + H2O2 + NH4(+). The enzyme catalyses L-leucine + O2 + H2O = 4-methyl-2-oxopentanoate + H2O2 + NH4(+). Its function is as follows. Catalyzes an oxidative deamination of predominantly hydrophobic and aromatic L-amino acids, thus producing hydrogen peroxide that may contribute to the diverse toxic effects of this enzyme. Shows activity on L-Leu. Exhibits diverse biological activities, such as hemorrhage, hemolysis, edema, apoptosis of vascular endothelial cells or tumor cell lines, and antiparasitic activities, as well as regulation of platelet aggregation. Effects of snake L-amino oxidases on platelets are controversial, since they either induce aggregation or inhibit agonist-induced aggregation. These different effects are probably due to different experimental conditions. In addition, this protein inhibits dose-dependently the growth of Gram-positive, Gram-negative bacteria and yeast, probably by the generation of hydrogen peroxide. This is L-amino-acid oxidase from Bothrops marajoensis (Marajo lancehead).